A 360-amino-acid chain; its full sequence is S-adenosylmethionine:tRNA ribosyltransferase-isomerase (360 aa).

The protein belongs to the QueA family. As to quaternary structure, monomer.

The protein resides in the cytoplasm. The catalysed reaction is 7-aminomethyl-7-carbaguanosine(34) in tRNA + S-adenosyl-L-methionine = epoxyqueuosine(34) in tRNA + adenine + L-methionine + 2 H(+). The protein operates within tRNA modification; tRNA-queuosine biosynthesis. Functionally, transfers and isomerizes the ribose moiety from AdoMet to the 7-aminomethyl group of 7-deazaguanine (preQ1-tRNA) to give epoxyqueuosine (oQ-tRNA). The chain is S-adenosylmethionine:tRNA ribosyltransferase-isomerase from Burkholderia pseudomallei (strain 1106a).